Here is a 167-residue protein sequence, read N- to C-terminus: NADH-ubiquinone oxidoreductase chain 6 (167 aa).

The next 5 membrane-spanning stretches (helical) occupy residues 1 to 21, 27 to 47, 50 to 70, 88 to 108, and 143 to 163; these read MKMM…VAFA, VYGG…VVSL, VFLG…VFGY, VALS…LMSG, and WALV…LEVV.

The protein belongs to the complex I subunit 6 family. As to quaternary structure, core subunit of respiratory chain NADH dehydrogenase (Complex I) which is composed of 45 different subunits.

The protein localises to the mitochondrion inner membrane. The enzyme catalyses a ubiquinone + NADH + 5 H(+)(in) = a ubiquinol + NAD(+) + 4 H(+)(out). Its function is as follows. Core subunit of the mitochondrial membrane respiratory chain NADH dehydrogenase (Complex I) which catalyzes electron transfer from NADH through the respiratory chain, using ubiquinone as an electron acceptor. Essential for the catalytic activity and assembly of complex I. The protein is NADH-ubiquinone oxidoreductase chain 6 (MT-ND6) of Osphranter robustus (Wallaroo).